Consider the following 122-residue polypeptide: S-adenosylmethionine decarboxylase proenzyme (122 aa).

Catalysis depends on S63, which acts as the Schiff-base intermediate with substrate; via pyruvic acid. S63 carries the pyruvic acid (Ser); by autocatalysis modification. H68 functions as the Proton acceptor; for processing activity in the catalytic mechanism. C83 serves as the catalytic Proton donor; for catalytic activity.

It belongs to the prokaryotic AdoMetDC family. Type 1 subfamily. As to quaternary structure, heterotetramer of two alpha and two beta chains arranged as a dimer of alpha/beta heterodimers. It depends on pyruvate as a cofactor. Post-translationally, is synthesized initially as an inactive proenzyme. Formation of the active enzyme involves a self-maturation process in which the active site pyruvoyl group is generated from an internal serine residue via an autocatalytic post-translational modification. Two non-identical subunits are generated from the proenzyme in this reaction, and the pyruvate is formed at the N-terminus of the alpha chain, which is derived from the carboxyl end of the proenzyme. The post-translation cleavage follows an unusual pathway, termed non-hydrolytic serinolysis, in which the side chain hydroxyl group of the serine supplies its oxygen atom to form the C-terminus of the beta chain, while the remainder of the serine residue undergoes an oxidative deamination to produce ammonia and the pyruvoyl group blocking the N-terminus of the alpha chain.

It carries out the reaction S-adenosyl-L-methionine + H(+) = S-adenosyl 3-(methylsulfanyl)propylamine + CO2. It functions in the pathway amine and polyamine biosynthesis; S-adenosylmethioninamine biosynthesis; S-adenosylmethioninamine from S-adenosyl-L-methionine: step 1/1. In terms of biological role, catalyzes the decarboxylation of S-adenosylmethionine to S-adenosylmethioninamine (dcAdoMet), the propylamine donor required for the synthesis of the polyamines spermine and spermidine from the diamine putrescine. In Methanococcus maripaludis (strain C5 / ATCC BAA-1333), this protein is S-adenosylmethionine decarboxylase proenzyme.